Consider the following 815-residue polypeptide: TBC1 domain family member 5 (815 aa).

Ser-44 bears the Phosphoserine mark. The interval 56–64 (MKEWEELFV) is required for interaction with retromer; involved in interaction with ATG8 family proteins. The LIR 1 signature appears at 57 to 62 (KEWEEL). Positions 81–359 (LRSSRFRSIC…VVWDALFADS (279 aa)) constitute a Rab-GAP TBC domain. Arg-448 carries the asymmetric dimethylarginine; alternate modification. Arg-448 carries the post-translational modification Omega-N-methylarginine; alternate. Ser-460 carries the phosphoserine modification. The segment at 475–591 (PGSMGGPVPG…SATKKDSFFS (117 aa)) is disordered. 2 stretches are compositionally biased toward low complexity: residues 483–492 (PGNNSSSSFS) and 510–539 (QQQQ…QQQQ). Ser-546, Ser-563, Ser-565, Ser-568, Ser-578, and Ser-608 each carry phosphoserine. The segment covering 556–568 (SSKTISSSPSIES) has biased composition (low complexity). Disordered regions lie at residues 702 to 733 (SGQD…PDDF) and 754 to 815 (QPLL…PLDI). A compositionally biased stretch (polar residues) spans 754-765 (QPLLTLRSTSGK). Residues 783-796 (PASASASSSNPSSS) show a composition bias toward low complexity. The LIR 2 signature appears at 805-809 (SGFTI). The tract at residues 806-811 (GFTIVS) is required for interaction with ATG8 family proteins. Position 811 is a phosphoserine (Ser-811).

Interacts with MAP1LC3A, MAP1LC3B, MAP1LC3C, GABARAP, GABARAPL1, GABARAPL2. Interacts with VPS29 and VPS35; indicative for an association with retromer CSC subcomplex. MAP1LC3A and VPS29 compete for binding to TBC1D5. Interacts with AP2M1; indicative for an association with the AP2 complex. Interacts with ULK1 and ATG13 (phosphorylated); indicative for an association with the activated ULK1-ATG13-FIP200 complex. Interacts with ATG9A; the interactions seems to be restricted to the AP2-clathrin-associated fraction of ATG9A.

It localises to the endosome membrane. The protein localises to the cytoplasmic vesicle. Its subcellular location is the autophagosome. In terms of biological role, may act as a GTPase-activating protein for Rab family protein(s). May act as a GAP for RAB7A. Can displace RAB7A and retromer CSC subcomplex from the endosomal membrane to the cytosol; at least retromer displacement seems to require its catalytic activity. Required for retrograde transport of cargo proteins from endosomes to the trans-Golgi network (TGN); the function seems to require its catalytic activity. Involved in regulation of autophagy. May act as a molecular switch between endosomal and autophagosomal transport and is involved in reprogramming vesicle trafficking upon autophagy induction. Involved in the trafficking of ATG9A upon activation of autophagy. May regulate the recruitment of ATG9A-AP2-containing vesicles to autophagic membranes. In Mus musculus (Mouse), this protein is TBC1 domain family member 5 (Tbc1d5).